Reading from the N-terminus, the 305-residue chain is MQKYDIKTFQGMILALQDYWAQNGCTIVQPLDMEVGAGTSHPMTCLRALGPEPMSTAYVQPSRRPTDGRYGENPNRLQHYYQFQVALKPSPDNIQELYLGSLEVLGVDPLVHDIRFVEDNWENPTLGAWGLGWEVWLNGMEVTQFTYFQQVGGLECKPVTGEITYGIERLAMYIQEVDSVYDLVWNIAPDGSKVTYGDIFHQNEVEQSTYNFEHADVEFLFGFFEQCEKECKELLELEKPLPLPAYERILKAGHAFNLLDARKAISVTERQRYILRIRNLTKAVAEAYYASREALGFPMCKKEQA.

The protein belongs to the class-II aminoacyl-tRNA synthetase family. Tetramer of two alpha and two beta subunits.

The protein resides in the cytoplasm. It carries out the reaction tRNA(Gly) + glycine + ATP = glycyl-tRNA(Gly) + AMP + diphosphate. The sequence is that of Glycine--tRNA ligase alpha subunit from Vibrio campbellii (strain ATCC BAA-1116).